The chain runs to 871 residues: Espin (871 aa).

ANK repeat units follow at residues 1 to 31 (MALE…GPSL), 35 to 66 (LDAL…AVSR), 69 to 99 (NGAT…RVQE), 103 to 132 (SGAT…ANSA), 137 to 167 (TGAL…GVNA), 171 to 201 (NGAT…DPHL), 205 to 235 (DGMT…SFSE), 239 to 268 (DGAT…EISQ), and 271 to 300 (WGGT…GLDV). Phosphoserine is present on residues Ser338 and Ser342. 4 disordered regions span residues 349–400 (QLDS…RGIP), 416–469 (PEKS…VGLH), 493–750 (KVEL…APGV), and 819–850 (EREQ…TLGY). The segment covering 352–365 (SGMSSPNTTMSVQP) has biased composition (polar residues). The span at 377–395 (FSNYDSCSSSHSSSKGQRS) shows a compositional bias: low complexity. Residues 428-465 (PSPPPPPPPPPPSFPPPPPPTGTQPPPPPPGYPAPNPP) show a composition bias toward pro residues. Ser517, Ser524, and Ser556 each carry phosphoserine. Positions 522-548 (QDSELLHRQELLRHSTGLRRQDSDRKQ) are enriched in basic and acidic residues. Positions 606–629 (LPPPPPPPPLPEALSSPPPAPPLP) are enriched in pro residues. 2 stretches are compositionally biased toward polar residues: residues 659 to 670 (KSFNMMSPTGDN) and 685 to 707 (PTPQ…SQPE). The residue at position 665 (Ser665) is a Phosphoserine. A WH2 domain is found at 669–686 (DNSELLAEIKAGKSLKPT). Ser704, Ser708, and Ser714 each carry phosphoserine. Positions 772–848 (KRQVMVRKLQ…KEQSEKLRTL (77 aa)) form a coiled coil.

In terms of assembly, monomer. Binds F-actin in a Ca(2+)-resistant fashion. Interacts (via N-terminus) with BAIAP2 (via SH3-domain). Interacts with PFN2. Interacts with MYO3A (via C-terminus). Interacts with MYO3B (via C-terminus). As to expression, expressed at high concentration in the microvillar parallel actin bundle (PAB) of hair cells stereocilia in the cochlea and vestibular system. Detected also at high levels of a number of other sensory cell types, including taste receptor cells, solitary chemoreceptor cells, vomeronasal sensory neurons and Merkel cells. Isoforms 2, 3, 4 and 5 are expressed in Purkinje cells dendritic spines. Expressed in utricle hair bundles (at protein level).

Its subcellular location is the cytoplasm. It is found in the cytoskeleton. The protein localises to the cell projection. It localises to the stereocilium. The protein resides in the microvillus. Its subcellular location is the cell junction. It is found in the dendritic spine. Functionally, multifunctional actin-bundling protein. Plays a major role in regulating the organization, dimension, dynamics and signaling capacities of the actin filament-rich microvilli in the mechanosensory and chemosensory cells. Required for the assembly and stabilization of the stereociliary parallel actin bundles. Plays a crucial role in the formation and maintenance of inner ear hair cell stereocilia. Involved in the elongation of actin in stereocilia. In extrastriolar hair cells, required for targeting MYO3B to stereocilia tips, and for regulation of stereocilia diameter and staircase formation. This is Espin (Espn) from Mus musculus (Mouse).